The chain runs to 176 residues: NADH-quinone oxidoreductase subunit B 1 (176 aa).

[4Fe-4S] cluster-binding residues include C55, C56, C120, and C150.

It belongs to the complex I 20 kDa subunit family. NDH-1 is composed of 14 different subunits. Subunits NuoB, C, D, E, F, and G constitute the peripheral sector of the complex. The cofactor is [4Fe-4S] cluster.

It is found in the cell inner membrane. It carries out the reaction a quinone + NADH + 5 H(+)(in) = a quinol + NAD(+) + 4 H(+)(out). Functionally, NDH-1 shuttles electrons from NADH, via FMN and iron-sulfur (Fe-S) centers, to quinones in the respiratory chain. Couples the redox reaction to proton translocation (for every two electrons transferred, four hydrogen ions are translocated across the cytoplasmic membrane), and thus conserves the redox energy in a proton gradient. The sequence is that of NADH-quinone oxidoreductase subunit B 1 from Cereibacter sphaeroides (strain ATCC 17029 / ATH 2.4.9) (Rhodobacter sphaeroides).